Here is a 229-residue protein sequence, read N- to C-terminus: Uracil-DNA glycosylase (229 aa).

The Proton acceptor role is filled by aspartate 70.

The protein belongs to the uracil-DNA glycosylase (UDG) superfamily. UNG family.

It is found in the cytoplasm. The enzyme catalyses Hydrolyzes single-stranded DNA or mismatched double-stranded DNA and polynucleotides, releasing free uracil.. Its function is as follows. Excises uracil residues from the DNA which can arise as a result of misincorporation of dUMP residues by DNA polymerase or due to deamination of cytosine. This Chlamydia abortus (strain DSM 27085 / S26/3) (Chlamydophila abortus) protein is Uracil-DNA glycosylase.